The sequence spans 355 residues: Protein RecA (355 aa).

67–74 serves as a coordination point for ATP; the sequence is GPESSGKT.

This sequence belongs to the RecA family.

It localises to the cytoplasm. In terms of biological role, can catalyze the hydrolysis of ATP in the presence of single-stranded DNA, the ATP-dependent uptake of single-stranded DNA by duplex DNA, and the ATP-dependent hybridization of homologous single-stranded DNAs. It interacts with LexA causing its activation and leading to its autocatalytic cleavage. The chain is Protein RecA from Histophilus somni (strain 129Pt) (Haemophilus somnus).